The sequence spans 342 residues: tRNA N6-adenosine threonylcarbamoyltransferase (342 aa).

H111 and H115 together coordinate Fe cation. Substrate-binding positions include 134 to 138, D167, G180, and N277; that span reads LVSGG. D305 lines the Fe cation pocket.

Belongs to the KAE1 / TsaD family. Fe(2+) is required as a cofactor.

It is found in the cytoplasm. It carries out the reaction L-threonylcarbamoyladenylate + adenosine(37) in tRNA = N(6)-L-threonylcarbamoyladenosine(37) in tRNA + AMP + H(+). Required for the formation of a threonylcarbamoyl group on adenosine at position 37 (t(6)A37) in tRNAs that read codons beginning with adenine. Is involved in the transfer of the threonylcarbamoyl moiety of threonylcarbamoyl-AMP (TC-AMP) to the N6 group of A37, together with TsaE and TsaB. TsaD likely plays a direct catalytic role in this reaction. The sequence is that of tRNA N6-adenosine threonylcarbamoyltransferase from Cellvibrio japonicus (strain Ueda107) (Pseudomonas fluorescens subsp. cellulosa).